A 152-amino-acid polypeptide reads, in one-letter code: Ribosomal RNA large subunit methyltransferase H (152 aa).

S-adenosyl-L-methionine-binding positions include leucine 68, glycine 100, and 119–124 (FGRMTW).

Belongs to the RNA methyltransferase RlmH family. In terms of assembly, homodimer.

Its subcellular location is the cytoplasm. The enzyme catalyses pseudouridine(1915) in 23S rRNA + S-adenosyl-L-methionine = N(3)-methylpseudouridine(1915) in 23S rRNA + S-adenosyl-L-homocysteine + H(+). Specifically methylates the pseudouridine at position 1915 (m3Psi1915) in 23S rRNA. This is Ribosomal RNA large subunit methyltransferase H from Paramagnetospirillum magneticum (strain ATCC 700264 / AMB-1) (Magnetospirillum magneticum).